A 178-amino-acid polypeptide reads, in one-letter code: Mediator of RNA polymerase II transcription subunit 31 (178 aa).

Over residues 129 to 140 (EGQELEESEDEA) the composition is skewed to acidic residues. The segment at 129–178 (EGQELEESEDEADIRQKDTEDEDDEETMKKPDADTAEKNSTTSTVSKKEK) is disordered. The span at 155 to 165 (TMKKPDADTAE) shows a compositional bias: basic and acidic residues. A compositionally biased stretch (polar residues) spans 166–178 (KNSTTSTVSKKEK).

Belongs to the Mediator complex subunit 31 family. In terms of assembly, component of the Mediator complex.

The protein resides in the nucleus. Its function is as follows. Component of the Mediator complex, a coactivator involved in the regulated transcription of nearly all RNA polymerase II-dependent genes. Mediator functions as a bridge to convey information from gene-specific regulatory proteins to the basal RNA polymerase II transcription machinery. Mediator is recruited to promoters by direct interactions with regulatory proteins and serves as a scaffold for the assembly of a functional preinitiation complex with RNA polymerase II and the general transcription factors. The polypeptide is Mediator of RNA polymerase II transcription subunit 31 (Caenorhabditis elegans).